The chain runs to 266 residues: Stomatin homolog PH1511 (266 aa).

Residues 7–27 traverse the membrane as a helical segment; that stretch reads FFVTSIILLFILIFLASAIKI. Coiled-coil stretches lie at residues 125-152 and 178-213; these read GQAHLDELLSERDKLNMQLQRIIDEATD and RQAEAERERRARITLAEAERQAAEKLREAAEIISEH.

Belongs to the band 7/mec-2 family. As to quaternary structure, homotrimer. Interacts with PH1510 and is cleaved by PH1510.

Its subcellular location is the membrane. The polypeptide is Stomatin homolog PH1511 (Pyrococcus horikoshii (strain ATCC 700860 / DSM 12428 / JCM 9974 / NBRC 100139 / OT-3)).